A 260-amino-acid chain; its full sequence is Thiazole synthase (260 aa).

Lys-100 serves as the catalytic Schiff-base intermediate with DXP. 1-deoxy-D-xylulose 5-phosphate is bound by residues Gly-161, 187 to 188 (AG), and 209 to 210 (NT).

Belongs to the ThiG family. In terms of assembly, homotetramer. Forms heterodimers with either ThiH or ThiS.

The protein resides in the cytoplasm. The enzyme catalyses [ThiS sulfur-carrier protein]-C-terminal-Gly-aminoethanethioate + 2-iminoacetate + 1-deoxy-D-xylulose 5-phosphate = [ThiS sulfur-carrier protein]-C-terminal Gly-Gly + 2-[(2R,5Z)-2-carboxy-4-methylthiazol-5(2H)-ylidene]ethyl phosphate + 2 H2O + H(+). It functions in the pathway cofactor biosynthesis; thiamine diphosphate biosynthesis. Functionally, catalyzes the rearrangement of 1-deoxy-D-xylulose 5-phosphate (DXP) to produce the thiazole phosphate moiety of thiamine. Sulfur is provided by the thiocarboxylate moiety of the carrier protein ThiS. In vitro, sulfur can be provided by H(2)S. This chain is Thiazole synthase, found in Sorangium cellulosum (strain So ce56) (Polyangium cellulosum (strain So ce56)).